The following is a 458-amino-acid chain: Cysteine--tRNA ligase (458 aa).

Cys-29 serves as a coordination point for Zn(2+). A 'HIGH' region motif is present at residues 31–41 (PTVYDNPHIGN). Positions 214, 239, and 243 each coordinate Zn(2+). A 'KMSKS' region motif is present at residues 272–276 (KMSKS). Residue Lys-275 coordinates ATP.

It belongs to the class-I aminoacyl-tRNA synthetase family. As to quaternary structure, monomer. The cofactor is Zn(2+).

It is found in the cytoplasm. The catalysed reaction is tRNA(Cys) + L-cysteine + ATP = L-cysteinyl-tRNA(Cys) + AMP + diphosphate. This chain is Cysteine--tRNA ligase, found in Rickettsia bellii (strain OSU 85-389).